The sequence spans 124 residues: MIKDRLLQLVHLLISLALIMGALGIGNTIQNLTGVSVPGSVIGMLVLFFSMTLGLVKVEWVKPGATLFIRYMILLFVPISVGLMQHFDMLLANALPIIASAVGGSLIVLISLAWFLDYLLKEKH.

The next 4 helical transmembrane spans lie at 6 to 26 (LLQLVHLLISLALIMGALGIG), 35 to 55 (VSVPGSVIGMLVLFFSMTLGL), 72 to 92 (MILLFVPISVGLMQHFDMLLA), and 95 to 115 (LPIIASAVGGSLIVLISLAWF).

This sequence belongs to the UPF0299 family.

Its subcellular location is the cell inner membrane. In Vibrio campbellii (strain ATCC BAA-1116), this protein is UPF0299 membrane protein VIBHAR_02118.